Here is a 310-residue protein sequence, read N- to C-terminus: Mas-related G-protein coupled receptor member E (310 aa).

Topologically, residues 1 to 22 are extracellular; it reads MTSLSVHTDSPSTQGEMAFNLT. Asn20 carries an N-linked (GlcNAc...) asparagine glycan. A helical transmembrane segment spans residues 23-43; sequence ILSLTELLSLGGLLGNGVALW. Residues 44–60 lie on the Cytoplasmic side of the membrane; the sequence is LLNQNVYRNPFSIYLLD. A helical membrane pass occupies residues 61-81; sequence VACADLIFLCCHMVAIIPELL. Topologically, residues 82 to 92 are extracellular; sequence QDQLNFPEFVH. Residues 93-113 form a helical membrane-spanning segment; it reads ISLTMLRFFCYIVGLSLLAAI. At 114 to 133 the chain is on the cytoplasmic side; sequence STEQCLATLFPAWYLCRRPR. A helical transmembrane segment spans residues 134–154; the sequence is YLTTCVCALIWVLCLLLDLLL. Residues 155–174 are Extracellular-facing; it reads SGACTQFFGAPSYHLCDMLW. A helical transmembrane segment spans residues 175 to 195; it reads LVVAVLLAALCCTMCVTSLLL. Residues 196-213 lie on the Cytoplasmic side of the membrane; it reads LLRVERGPERHQPRGFPT. The chain crosses the membrane as a helical span at residues 214 to 234; that stretch reads LVLLAVLLFLFCGLPFGIFWL. The Extracellular portion of the chain corresponds to 235 to 248; the sequence is SKNLSWHIPLYFYH. Asn237 carries an N-linked (GlcNAc...) asparagine glycan. Residues 249–269 traverse the membrane as a helical segment; that stretch reads FSFFMASVHSAAKPAIYFFLG. The Cytoplasmic portion of the chain corresponds to 270-310; it reads STPGQRFREPLRLVLQRALGDEAELGAGREASQGGLVDMTV.

Belongs to the G-protein coupled receptor 1 family. Mas subfamily.

The protein resides in the cell membrane. In terms of biological role, orphan receptor. May regulate nociceptor function and/or development, including the sensation or modulation of pain. This is Mas-related G-protein coupled receptor member E (Mrgpre) from Mus musculus (Mouse).